A 688-amino-acid polypeptide reads, in one-letter code: Soluble guanylate cyclase gcy-35 (688 aa).

His-105 provides a ligand contact to heme. Positions 358-401 form a coiled coil; the sequence is LNQSRMSQVELNRTLEETTKKLKKMAQELEIEKQKTDELLCELM. A Guanylate cyclase domain is found at 424-552; the sequence is TLLFTDIVTF…DTVNVANKME (129 aa). The Mg(2+) site is built by Asp-429 and Asp-473. Residues 644–688 are disordered; the sequence is VENGNSAQNNHNNNNNTHHSGRKLMNGSSVDPGSHHIRSPTCTIS. Residues 646-659 are compositionally biased toward low complexity; that stretch reads NGNSAQNNHNNNNN.

This sequence belongs to the adenylyl cyclase class-4/guanylyl cyclase family. Heterodimer; heterodimerizes with gcy-36, and possibly with other soluble guanylate cyclases. Heme is required as a cofactor. In terms of tissue distribution, expressed in URX, AQR and PQR neurons. Also expressed in ALN, SDQ and BDU neurons, and variably in AVM, PLM and PLN neurons, pharyngeal and body wall muscles, and the excretory cell.

It localises to the cytoplasm. The protein resides in the cell projection. Its subcellular location is the dendrite. It carries out the reaction GTP = 3',5'-cyclic GMP + diphosphate. With respect to regulation, regulated by molecular oxygen, which binds to the heme binding site. Probably not activated by nitric oxide (NO). In terms of biological role, plays a central role in social feeding behavior and oxygen sensation by synthesizing 3',5'-cyclic guanosine monophosphate (cGMP) from GTP. Oxygen, which binds to its heme-binding sites, probably regulates social behavior by modulating its activity. cGMP is a common second messenger in sensory transduction and is implicated in oxygen sensation. Indeed, C.elegans exhibits a strong behavioral preference for 5-12% oxygen, avoiding higher and lower oxygen levels; a higher level of oxygen inducing a naturally polymorphic social feeding behavior. Involved in avoidance of hyperoxia and for oxygen-induced aggregation and bordering, probably by mediating oxygen-sensing in URX, AQR and PQR sensory neurons. The protein is Soluble guanylate cyclase gcy-35 (gcy-35) of Caenorhabditis elegans.